Here is a 136-residue protein sequence, read N- to C-terminus: Cytidine deaminase (136 aa).

The 128-residue stretch at 1–128 (MNRQELITEA…ELLPGAFSSE (128 aa)) folds into the CMP/dCMP-type deaminase domain. 42–44 (NIE) contacts substrate. Cysteine 53 contributes to the Zn(2+) binding site. The active-site Proton donor is glutamate 55. Positions 86 and 89 each coordinate Zn(2+).

Belongs to the cytidine and deoxycytidylate deaminase family. Homotetramer. The cofactor is Zn(2+).

The catalysed reaction is cytidine + H2O + H(+) = uridine + NH4(+). It catalyses the reaction 2'-deoxycytidine + H2O + H(+) = 2'-deoxyuridine + NH4(+). In terms of biological role, this enzyme scavenges exogenous and endogenous cytidine and 2'-deoxycytidine for UMP synthesis. In Bacillus subtilis (strain 168), this protein is Cytidine deaminase (cdd).